We begin with the raw amino-acid sequence, 505 residues long: Kinesin light chain 3 (505 aa).

The disordered stretch occupies residues 1–20; the sequence is MSVQVAAPGGLGLGLERPSP. The stretch at 88 to 150 forms a coiled coil; that stretch reads LLALSAHVGA…EEEKSHLEFL (63 aa). Residues 157–193 are disordered; the sequence is DPPAESQQPESPPRRDSLASLFPSEEEERRGPEAVGA. S173 is subject to Phosphoserine. TPR repeat units follow at residues 207-240, 249-282, 291-324, 333-366, and 375-408; these read LRTLHNLVIQYAGQGRYEVAVPLCRQALEDLERS, ATMLNILALVYRDQNKYKEATDLLHDALQIREQT, AATLNNLAVLYGKRGRYREAEPLCQRALEIREKV, AKQLNNLALLCQNQGKFEEVERHYARALSIYEAL, and AKTKNNLASAYLKQNKYQQAEELYKEILHREALP. The segment at 409-505 is disordered; it reads APLGAPNTGT…STSTQDLGPR (97 aa). The span at 416 to 434 shows a compositional bias: low complexity; sequence TGTTSDTQQQTLSRSSSFS. Over residues 435–453 the composition is skewed to basic and acidic residues; that stretch reads KLRESIRRGSEKLVSRLRG. The residue at position 467 (S467) is a Phosphoserine. Positions 489-505 are enriched in polar residues; sequence SEASRTLSTSTQDLGPR. Position 499 is a phosphothreonine (T499).

It belongs to the kinesin light chain family. In terms of assembly, oligomer composed of two heavy chains and two light chains. Associates with microtubulin in an ATP-dependent manner. Interacts with KIF5C. Interacts with ODF1. Interacts with LRGUK. Interacts with VDAC2.

It localises to the cytoplasm. The protein localises to the cytoskeleton. The protein resides in the mitochondrion. Functionally, kinesin is a microtubule-associated force-producing protein that may play a role in organelle transport. Plays a role during spermiogenesis in the development of the sperm tail midpiece and in the normal function of spermatozoa. May play a role in the formation of the mitochondrial sheath formation in the developing spermatid midpiece. The sequence is that of Kinesin light chain 3 (KLC3) from Bos taurus (Bovine).